The sequence spans 766 residues: Leucine-rich repeat and fibronectin type III domain-containing protein 1 (766 aa).

The N-terminal stretch at 1-31 (MAPGPFSSGLFSPPPAALPFLLLLWAGASRG) is a signal peptide. The region spanning 32-65 (QPCPGRCICQNVAPTLTMLCAKTGLLFVPPAIDR) is the LRRNT domain. The Extracellular portion of the chain corresponds to 32–536 (QPCPGRCICQ…LRAHFLGGTM (505 aa)). LRR repeat units lie at residues 66-87 (RVVELRLTDNFIAAVRRRDFAN), 90-111 (SLVHLTLSRNTIGQVAAGAFAD), 114-135 (ALRALHLDSNRLAEVRGDQLRG), 138-159 (NLRHLILGNNQIRKVESAAFDA), 163-184 (TVEDLDLSYNNLEALPWEAVGQ), 187-208 (NLNTLTLDHNLIDHIAEGTFVQ), and 211-232 (KLVRLDMTSNRLHKLPPDGLFL). A glycan (N-linked (GlcNAc...) asparagine) is linked at Asn87. The region spanning 252–298 (NPLHCNCELLWLRRLTREDDLETCATPEHLTDRYFWSIPEEEFLCEP) is the LRRCT domain. Residues 299–386 (PLITRQAGGR…GEATAPVEVC (88 aa)) form the Ig-like domain. A disulfide bond links Cys321 and Cys370. Asn343 is a glycosylation site (N-linked (GlcNAc...) asparagine). The tract at residues 397 to 424 (PAAPPPLTEPGSSDIATPGRPGANDSTS) is disordered. The 97-residue stretch at 424–520 (SERRLVAAEL…GCVQFTTAGD (97 aa)) folds into the Fibronectin type-III domain. A helical membrane pass occupies residues 537–557 (IIAIGGVIVASVLVFIVLLMI). Over 558–766 (RYKVYGDGDS…STEWMLESTV (209 aa)) the chain is Cytoplasmic. Disordered stretches follow at residues 568–601 (RRIKGTSRTPPRVSHVCSQTNGAGAQQASAPPAP) and 645–742 (LCLL…GEDG). Ser713 carries the post-translational modification Phosphoserine. A compositionally biased stretch (basic residues) spans 714 to 727 (YPRRARRTKRHRST). The PDZ-binding motif lies at 763–766 (ESTV).

It belongs to the LRFN family. Can form heteromeric complexes with LRFN2, LRFN3, LRFN4 and LRFN5. Forms homomeric complexes, but not across cell junctions. Interacts with DLG4. Also interacts with DLG1, DLG2, and DLG3. Interacts with 2 AMPA receptor subunits GRIA1 and GRIA2 and NMDA receptor subunit GRIN1. In terms of processing, glycosylated. Predominantly expressed in the brain, with a weak, but broad expression in the cerebral cortex and diencephalic nuclei. Also detected in other parts of the central nervous system, including the olfactory bulb, pons, cerebellum, and medulla oblongata, as well as in the peripheral nervous system, such as the ganglia of cranial nerves and the dorsal root ganglion during gestation.

Its subcellular location is the membrane. It localises to the synapse. The protein localises to the postsynaptic density membrane. Promotes neurite outgrowth in hippocampal neurons. Involved in the regulation and maintenance of excitatory synapses. Induces the clustering of excitatory postsynaptic proteins, including DLG4, DLGAP1, GRIA1 and GRIN1. This Mus musculus (Mouse) protein is Leucine-rich repeat and fibronectin type III domain-containing protein 1 (Lrfn1).